We begin with the raw amino-acid sequence, 604 residues long: Membrane protein insertase YidC (604 aa).

Residues 8–28 (LYLAIGLSLLVLIGWNYFFAG) form a helical membrane-spanning segment. Positions 42–84 (EQQAQTQTTSDTTARSDLNVPGQRSLPGESPQTQLSRPEALAA) are disordered. The segment covering 43–58 (QQAQTQTTSDTTARSD) has biased composition (low complexity). 5 consecutive transmembrane segments (helical) span residues 349 to 369 (FDLLIDWGYFYFITRPMFWIL), 375 to 395 (VVGNFGVAILCITVLVKAVFF), 449 to 469 (LPMLIQIPVFFALYKVLFVTI), 507 to 527 (MIGHFLAIGIWPLIMGVSMFF), and 546 to 566 (WMPVIFTFMLGTFPSGLVIYW).

It belongs to the OXA1/ALB3/YidC family. Type 1 subfamily. Interacts with the Sec translocase complex via SecD. Specifically interacts with transmembrane segments of nascent integral membrane proteins during membrane integration.

It is found in the cell inner membrane. Functionally, required for the insertion and/or proper folding and/or complex formation of integral membrane proteins into the membrane. Involved in integration of membrane proteins that insert both dependently and independently of the Sec translocase complex, as well as at least some lipoproteins. Aids folding of multispanning membrane proteins. The chain is Membrane protein insertase YidC from Beijerinckia indica subsp. indica (strain ATCC 9039 / DSM 1715 / NCIMB 8712).